The primary structure comprises 267 residues: Hydroxyethylthiazole kinase (267 aa).

M48 serves as a coordination point for substrate. The ATP site is built by R124 and S170. Position 197 (G197) interacts with substrate.

This sequence belongs to the Thz kinase family. It depends on Mg(2+) as a cofactor.

The enzyme catalyses 5-(2-hydroxyethyl)-4-methylthiazole + ATP = 4-methyl-5-(2-phosphooxyethyl)-thiazole + ADP + H(+). Its pathway is cofactor biosynthesis; thiamine diphosphate biosynthesis; 4-methyl-5-(2-phosphoethyl)-thiazole from 5-(2-hydroxyethyl)-4-methylthiazole: step 1/1. In terms of biological role, catalyzes the phosphorylation of the hydroxyl group of 4-methyl-5-beta-hydroxyethylthiazole (THZ). The sequence is that of Hydroxyethylthiazole kinase from Leptospira biflexa serovar Patoc (strain Patoc 1 / Ames).